Reading from the N-terminus, the 512-residue chain is UDP-N-acetylmuramate--L-alanine ligase (512 aa).

Residue 132–138 (GAHGKTT) participates in ATP binding.

It belongs to the MurCDEF family.

The protein resides in the cytoplasm. It carries out the reaction UDP-N-acetyl-alpha-D-muramate + L-alanine + ATP = UDP-N-acetyl-alpha-D-muramoyl-L-alanine + ADP + phosphate + H(+). It participates in cell wall biogenesis; peptidoglycan biosynthesis. Its function is as follows. Cell wall formation. This chain is UDP-N-acetylmuramate--L-alanine ligase, found in Bifidobacterium longum (strain NCC 2705).